A 593-amino-acid chain; its full sequence is Sodium-independent sulfate anion transporter (593 aa).

The Extracellular portion of the chain corresponds to 1–34 (MAPDTCCCSATALRRRLPVLAWVPDYSLQWLRLD). A helical membrane pass occupies residues 35-55 (FIAGLSVGLTVIPQALAYAEV). Residue alanine 56 is a topological domain, cytoplasmic. Residues 57-77 (GLPPQYGLYSAFMGCFVYFFL) form a helical membrane-spanning segment. At 78–82 (GTSRD) the chain is on the extracellular side. The helical transmembrane segment at 83–100 (VTLGPTAIMSLLVSFYTF) threads the bilayer. The Cytoplasmic segment spans residues 101–106 (REPAYA). Residues 107 to 127 (VLLAFLSGCIQLAMGLLHLGF) form a helical membrane-spanning segment. The Extracellular portion of the chain corresponds to 128 to 176 (LLDFISCPVIKGFTSAASITIGFGQIKNLLGLQKIPRQFFLQVYHTFLH). Residues 177-197 (IGETRVGDAVLGLASMLLLLV) traverse the membrane as a helical segment. Residues 198–233 (LKCMREHMPPPHPEMPLAVKFSRGLVWTVTTARNAL) are Cytoplasmic-facing. A helical membrane pass occupies residues 234 to 254 (VVSSAALIAYAFEVTGSHPFV). At 255–287 (LTGKIAEGLPPVRIPPFSVTRDNKTISFSEMVQ) the chain is on the extracellular side. The helical transmembrane segment at 288–308 (DMGAGLAVVPLMGLLESIAVA) threads the bilayer. Residues 309 to 324 (KSFASQNNYRIDANQE) are Cytoplasmic-facing. Residues 325-345 (LLAIGLTNVLGSLVSSYPVTG) form a helical membrane-spanning segment. Residues 346–361 (SFGRTAVNAQTGVCTP) lie on the Extracellular side of the membrane. The chain crosses the membrane as a helical span at residues 362 to 382 (AGGLVTGALVLLSLNYLTSLF). Serine 383 is a topological domain (cytoplasmic). The helical transmembrane segment at 384 to 404 (YIPKSALAAVIITAVTPLFDV) threads the bilayer. The Extracellular segment spans residues 405 to 417 (KIFRSLWRVQRLD). Residues 418–438 (LLPLCVTFLLSFWEIQYGILA) form a helical membrane-spanning segment. Residues 439–593 (GSLVSLLILL…SSLLKSPSGP (155 aa)) lie on the Cytoplasmic side of the membrane. The STAS domain maps to 453 to 566 (RPKTQVSEGQ…EEAEKFLQQE (114 aa)). Residues 564–593 (QQEPGTEPNSIHEDAVPEQRSSLLKSPSGP) are disordered. Residues 582-593 (QRSSLLKSPSGP) show a composition bias toward polar residues.

Belongs to the SLC26A/SulP transporter (TC 2.A.53) family. Abundantly expressed in the cerebellum, with a predominant expression in Purkinje cells (at protein level). In terms of tissue distribution, predominantly expressed in the kidney and brain. In the kidney localizes in collecting duct intercalated cells (at protein level). As to expression, predominantly expressed in the brain with lower levels in the kidney.

Its subcellular location is the cell membrane. It is found in the lysosome membrane. The protein localises to the apical cell membrane. It localises to the basolateral cell membrane. The enzyme catalyses hydrogencarbonate(in) + chloride(out) = hydrogencarbonate(out) + chloride(in). The catalysed reaction is sulfate(in) + H(+)(in) = sulfate(out) + H(+)(out). It catalyses the reaction oxalate(in) + chloride(out) = oxalate(out) + chloride(in). Functionally, sodium-independent anion exchanger mediating bicarbonate, chloride, sulfate and oxalate transport. Exhibits sodium-independent sulfate anion transporter activity that may cooperate with SLC26A2 to mediate DIDS-sensitive sulfate uptake into high endothelial venules endothelial cells (HEVEC). In the kidney, mediates chloride-bicarbonate exchange, facilitating V-ATPase-mediated acid secretion. May function as a chloride channel, playing an important role in moderating chloride homeostasis and neuronal activity in the cerebellum. This Mus musculus (Mouse) protein is Sodium-independent sulfate anion transporter.